The following is a 111-amino-acid chain: uncharacterized protein (111 aa).

Residues 1 to 26 form a disordered region; it reads MDLKDGVEEEEGAGENGKGGTHAQRV.

This is an uncharacterized protein from Caenorhabditis elegans.